The chain runs to 683 residues: Methionine--tRNA ligase (683 aa).

The short motif at P15 to H25 is the 'HIGH' region element. 4 residues coordinate Zn(2+): C146, C149, C159, and C162. The short motif at K332–S336 is the 'KMSKS' region element. K335 serves as a coordination point for ATP. Residues D582–M683 enclose the tRNA-binding domain.

This sequence belongs to the class-I aminoacyl-tRNA synthetase family. MetG type 1 subfamily. In terms of assembly, homodimer. It depends on Zn(2+) as a cofactor.

It is found in the cytoplasm. The enzyme catalyses tRNA(Met) + L-methionine + ATP = L-methionyl-tRNA(Met) + AMP + diphosphate. Its function is as follows. Is required not only for elongation of protein synthesis but also for the initiation of all mRNA translation through initiator tRNA(fMet) aminoacylation. This Vibrio cholerae serotype O1 (strain ATCC 39315 / El Tor Inaba N16961) protein is Methionine--tRNA ligase.